A 336-amino-acid polypeptide reads, in one-letter code: Ribosomal RNA large subunit methyltransferase F (336 aa).

This sequence belongs to the methyltransferase superfamily. METTL16/RlmF family.

It localises to the cytoplasm. The enzyme catalyses adenosine(1618) in 23S rRNA + S-adenosyl-L-methionine = N(6)-methyladenosine(1618) in 23S rRNA + S-adenosyl-L-homocysteine + H(+). Specifically methylates the adenine in position 1618 of 23S rRNA. This Yersinia pestis bv. Antiqua (strain Angola) protein is Ribosomal RNA large subunit methyltransferase F.